Reading from the N-terminus, the 315-residue chain is Putative steroid dehydrogenase 3 (315 aa).

47–76 (ASWAVITGGTDGIGKSFSFELAKRGFNIYI) is an NADP(+) binding site. The active site involves Tyr202.

This sequence belongs to the short-chain dehydrogenases/reductases (SDR) family. 17-beta-HSD 3 subfamily.

The chain is Putative steroid dehydrogenase 3 (stdh-3) from Caenorhabditis elegans.